Reading from the N-terminus, the 96-residue chain is Aspartyl/glutamyl-tRNA(Asn/Gln) amidotransferase subunit C (96 aa).

Belongs to the GatC family. In terms of assembly, heterotrimer of A, B and C subunits.

The catalysed reaction is L-glutamyl-tRNA(Gln) + L-glutamine + ATP + H2O = L-glutaminyl-tRNA(Gln) + L-glutamate + ADP + phosphate + H(+). It catalyses the reaction L-aspartyl-tRNA(Asn) + L-glutamine + ATP + H2O = L-asparaginyl-tRNA(Asn) + L-glutamate + ADP + phosphate + 2 H(+). Allows the formation of correctly charged Asn-tRNA(Asn) or Gln-tRNA(Gln) through the transamidation of misacylated Asp-tRNA(Asn) or Glu-tRNA(Gln) in organisms which lack either or both of asparaginyl-tRNA or glutaminyl-tRNA synthetases. The reaction takes place in the presence of glutamine and ATP through an activated phospho-Asp-tRNA(Asn) or phospho-Glu-tRNA(Gln). The chain is Aspartyl/glutamyl-tRNA(Asn/Gln) amidotransferase subunit C from Fusobacterium nucleatum subsp. nucleatum (strain ATCC 25586 / DSM 15643 / BCRC 10681 / CIP 101130 / JCM 8532 / KCTC 2640 / LMG 13131 / VPI 4355).